Reading from the N-terminus, the 410-residue chain is Multidrug resistance protein MdtM (410 aa).

Residues 1–11 (MPRFFTRHAAT) lie on the Cytoplasmic side of the membrane. The chain crosses the membrane as a helical span at residues 12–32 (LFFPMALILYDFAAYLSTDLI). Topologically, residues 33-48 (QPGIINVVRDFNADVS) are periplasmic. Residues 49–69 (LAPAAVSLYLAGGMALQWLLG) form a helical membrane-spanning segment. At 70–78 (PLSDRIGRR) the chain is on the cytoplasmic side. The chain crosses the membrane as a helical span at residues 79–99 (PVLITGALIFTLACAATMFTT). Residues 100–103 (SMTQ) lie on the Periplasmic side of the membrane. A helical transmembrane segment spans residues 104–124 (FLIARAIQGTSICFIATVGYV). Over 125–140 (TVQEAFGQTKGIKLMA) the chain is Cytoplasmic. The helical transmembrane segment at 141–161 (IITSIVLIAPIIGPLSGAALM) threads the bilayer. Topologically, residues 162 to 167 (HFMHWK) are periplasmic. Residues 168-188 (VLFAIIAVMGFISFVGLLLAM) traverse the membrane as a helical segment. At 189–216 (PETVKRGAVPFSAKSVLRDFRNVFCNRL) the chain is on the cytoplasmic side. The helical transmembrane segment at 217-237 (FLFGAATISLSYIPMMSWVAV) threads the bilayer. Residues 238-251 (SPVILIDAGSLTTS) are Periplasmic-facing. Residues 252–272 (QFAWTQVPVFGAVIVANAIVA) form a helical membrane-spanning segment. At 273–282 (RFVKDPTEPR) the chain is on the cytoplasmic side. Residues 283-303 (FIWRAVPIQLVGLSLLIVGNL) traverse the membrane as a helical segment. Over 304–307 (LSPH) the chain is Periplasmic. The chain crosses the membrane as a helical span at residues 308 to 328 (VWLWSVLGTSLYAFGIGLIFP). Residues 329 to 348 (TLFRFTLFSNKLPKGTVSAS) lie on the Cytoplasmic side of the membrane. The chain crosses the membrane as a helical span at residues 349 to 369 (LNMVILMVMSVSVEIGRWLWF). Residues 370 to 373 (NGGR) lie on the Periplasmic side of the membrane. The helical transmembrane segment at 374–394 (LPFHLLAVVAGVIVVFTLAGL) threads the bilayer. Over 395–410 (LNRVRQHQAAELVEEQ) the chain is Cytoplasmic.

This sequence belongs to the major facilitator superfamily. In terms of assembly, monomer.

Its subcellular location is the cell inner membrane. The catalysed reaction is Na(+)(in) + 2 H(+)(out) = Na(+)(out) + 2 H(+)(in). The enzyme catalyses K(+)(in) + H(+)(out) = K(+)(out) + H(+)(in). Efflux is inhibited by the ionophore carbonyl cyanide 3-chlorophenylhydrazone (CCCP). In terms of biological role, proton-dependent efflux pump. Confers resistance to a broad spectrum of chemically unrelated substrates. Overexpression confers resistance to acriflavine, chloramphenicol, norfloxacin, ethidium bromide and tetraphenylphosphonium bromide (TPP). Can also export a broad range of quaternary ammonium compounds (QACs) and contribute to the intrinsic resistance of E.coli to these antimicrobial compounds. In addition to its role in multidrug resistance, MdtM likely plays a physiological role in alkaline pH homeostasis and in resistance to bile salts. May function in alkaline pH homeostasis when millimolar concentrations of sodium or potassium are present in the growth medium. When overexpressed, can confer a tolerance to alkaline pH values up to 9.75. Probably acts as a low-affinity antiporter that catalyzes the exchange of internal Na(+) and K(+) cations for extracellular protons to maintain a stable internal pH, acid relative to outside, during exposure to alkaline environments. Can also catalyze Rb(+)/H(+) and Li(+)/H(+) antiport, but not Ca(2+)/H(+) exchange. The exact stoichiometry of antiport is unknown. Finally, it could contribute to bile salt resistance by catalyzing the transport of bile salts out of the cell cytoplasm. Mediates a bile salt/H(+) exchange driven by the electrochemical gradient. Binds to cholate and deoxycholate with micromolar affinity and catalyzes both cholate/H(+) and deoxycholate/H(+) exchange reactions. This chain is Multidrug resistance protein MdtM, found in Escherichia coli (strain K12).